The primary structure comprises 214 residues: NKG2-D type II integral membrane protein (214 aa).

Over 1 to 56 the chain is Cytoplasmic; that stretch reads MGWIRDRRSPSSMEIRELHNRDVINRGAFKSRQKRTQTLITSKCGENPSPFFLARS. The chain crosses the membrane as a helical; Signal-anchor for type II membrane protein span at residues 57 to 77; it reads IAIAMGIRFIVMVMIYSGMII. Residues 78–214 lie on the Extracellular side of the membrane; sequence NLLFNQEAPS…NTYICMKRTV (137 aa). Cystine bridges form between Cys-94/Cys-103 and Cys-97/Cys-108. In terms of domain architecture, C-type lectin spans 98 to 210; the sequence is PKNWICYRNS…CLTLNTYICM (113 aa). Asn-113, Asn-129, Asn-161, and Asn-184 each carry an N-linked (GlcNAc...) asparagine glycan. 2 cysteine pairs are disulfide-bonded: Cys-125–Cys-209 and Cys-187–Cys-201.

In terms of assembly, homodimer; disulfide-linked. Heterohexamer composed of two subunits of KLRK1 and four subunits of HCST/DAP10. Interacts (via transmembrane domain) with HCST/DAP10 (via transmembrane domain); the interaction is required for KLRK1 NK cell surface and induces NK cell-mediated cytotoxicity. Can form disulfide-bonded heterodimer with CD94. Interacts with CEACAM1; recruits PTPN6 that dephosphorylates VAV1. Detected in peripheral blood leukocytes, macrophages, monocytes and natural killer cells.

The protein resides in the cell membrane. Its function is as follows. Functions as an activating and costimulatory receptor involved in immunosurveillance upon binding to various cellular stress-inducible ligands displayed at the surface of autologous tumor cells and virus-infected cells. Provides both stimulatory and costimulatory innate immune responses on activated killer (NK) cells, leading to cytotoxic activity. Acts as a costimulatory receptor for T-cell receptor (TCR) in CD8(+) T-cell-mediated adaptive immune responses by amplifying T-cell activation. Stimulates perforin-mediated elimination of ligand-expressing tumor cells. Signaling involves calcium influx, culminating in the expression of TNF-alpha. Participates in NK cell-mediated bone marrow graft rejection. May play a regulatory role in differentiation and survival of NK cells. Binds to ligands belonging to various subfamilies of MHC class I-related glycoproteins. This Sus scrofa (Pig) protein is NKG2-D type II integral membrane protein (KLRK1).